The primary structure comprises 270 residues: tRNA pseudouridine synthase A (270 aa).

Asp51 acts as the Nucleophile in catalysis. Tyr109 is a binding site for substrate.

The protein belongs to the tRNA pseudouridine synthase TruA family. Homodimer.

It carries out the reaction uridine(38/39/40) in tRNA = pseudouridine(38/39/40) in tRNA. In terms of biological role, formation of pseudouridine at positions 38, 39 and 40 in the anticodon stem and loop of transfer RNAs. In Variovorax paradoxus (strain S110), this protein is tRNA pseudouridine synthase A.